The following is a 20-amino-acid chain: YYTVLFGVSRALGLPLERPK.

It belongs to the citrate synthase family. In terms of assembly, homodimer.

The enzyme catalyses oxaloacetate + acetyl-CoA + H2O = citrate + CoA + H(+). It functions in the pathway carbohydrate metabolism; tricarboxylic acid cycle; isocitrate from oxaloacetate: step 1/2. This chain is Citrate synthase, found in Populus euphratica (Euphrates poplar).